A 317-amino-acid polypeptide reads, in one-letter code: Melanocyte-stimulating hormone receptor (317 aa).

Residues 1–37 lie on the Extracellular side of the membrane; it reads MPVQGSQRRLLGSLNSTPTATPRLGLAANQTGARCLE. N29 carries an N-linked (GlcNAc...) asparagine glycan. A helical transmembrane segment spans residues 38-63; that stretch reads VSIPDGLFLSLGLVSLVENVLVVVAI. Residues 64 to 72 lie on the Cytoplasmic side of the membrane; the sequence is ARNRNLHSP. Residues 73–93 traverse the membrane as a helical segment; that stretch reads MYCFICCLALSDLLVSGSNML. The Extracellular portion of the chain corresponds to 94-118; sequence ETAVFLLLEAGALAARAAVVQQLDN. A helical membrane pass occupies residues 119-140; sequence VIDVITCSSMLSSLCFLGAIAV. Residues 141 to 163 lie on the Cytoplasmic side of the membrane; the sequence is DRYISIFYALRYHSIVTLRRARR. A helical transmembrane segment spans residues 164-183; sequence VVAAIWVASVLFSTLFIAYC. Over 184 to 191 the chain is Extracellular; that stretch reads DHAAVLLC. A helical membrane pass occupies residues 192 to 211; sequence LVVFFLAMLVLMAVLYVHML. At 212–240 the chain is on the cytoplasmic side; that stretch reads ARACQHAQGIAQLHKRQRPAHQGVGLKGA. Residues 241–266 traverse the membrane as a helical segment; that stretch reads ATLTILLGIFFLCWGPFFLHLTLIVL. The Extracellular segment spans residues 267 to 279; the sequence is CPQHPTCSCIFKN. Residues 280–300 form a helical membrane-spanning segment; sequence FNLFLTLIICNAIIDPLIYAF. Topologically, residues 301 to 317 are cytoplasmic; sequence RSQELRRTLKKVLLCSW. C315 carries the S-palmitoyl cysteine lipid modification.

It belongs to the G-protein coupled receptor 1 family. In terms of assembly, interacts with MGRN1, but does not undergo MGRN1-mediated ubiquitination; this interaction competes with GNAS-binding and thus inhibits agonist-induced cAMP production. Interacts with OPN3; the interaction results in a decrease in MC1R-mediated cAMP signaling and ultimately a decrease in melanin production in melanocytes.

The protein resides in the cell membrane. In terms of biological role, receptor for MSH (alpha, beta and gamma) and ACTH. The activity of this receptor is mediated by G proteins which activate adenylate cyclase. Mediates melanogenesis, the production of eumelanin (black/brown) and phaeomelanin (red/yellow), via regulation of cAMP signaling in melanocytes. The polypeptide is Melanocyte-stimulating hormone receptor (MC1R) (Trachypithecus obscurus (Dusky leaf-monkey)).